A 502-amino-acid polypeptide reads, in one-letter code: Maturase K (502 aa).

It belongs to the intron maturase 2 family. MatK subfamily.

The protein localises to the plastid. It is found in the chloroplast. Functionally, usually encoded in the trnK tRNA gene intron. Probably assists in splicing its own and other chloroplast group II introns. This is Maturase K from Theobroma cacao (Cacao).